We begin with the raw amino-acid sequence, 854 residues long: Patatin-like phospholipase domain-containing protein CHGG_02900 (854 aa).

3 disordered regions span residues 1 to 29 (MAGP…YGFP), 58 to 138 (LSAP…PPLS), and 159 to 186 (QRRV…RSKD). Residues 96–116 (DLARRPESSGVGFHDEDRTAR) show a composition bias toward basic and acidic residues. Over residues 119–132 (PAGAATAAAAGVAT) the composition is skewed to low complexity. A helical transmembrane segment spans residues 199-219 (WPLLGVVTCWLVGLSVVHVLA). Positions 387 to 578 (LCLSGGATFA…RTDIPIKALN (192 aa)) constitute a PNPLA domain. Positions 418 to 422 (GTSGG) match the GXSXG motif. The Nucleophile role is filled by serine 420. Aspartate 565 acts as the Proton acceptor in catalysis. Disordered stretches follow at residues 724–776 (RENR…SILS) and 791–830 (RGGI…LEFG). Residues 729 to 751 (GGGLGDGGVGSSGGAGGGAGGGQ) show a composition bias toward gly residues. Low complexity predominate over residues 752–761 (AEAVAGQAAG). Over residues 799–812 (TESEDETSDLDADF) the composition is skewed to acidic residues.

It belongs to the PLPL family.

It is found in the membrane. Its function is as follows. Probable lipid hydrolase. The sequence is that of Patatin-like phospholipase domain-containing protein CHGG_02900 from Chaetomium globosum (strain ATCC 6205 / CBS 148.51 / DSM 1962 / NBRC 6347 / NRRL 1970) (Soil fungus).